The primary structure comprises 456 residues: MALPIVAIIGRPNVGKSTLVNRLAGEQTAIVHDEPGVTRDRTYMPAFWNGREFLVVDTGGLVFNDDTEFLPLIRQQAMTALAEACAAIFVVDGQTGPTSADQEIAEWMRQQRVPVLLAVNKCESPDQGLMQAAEFWELGLGEPYPISAIHGSGTGELLDELVNHIPAVEDIPETNEIKVAIVGRPNVGKSSLLNAFVGEERAIVSPISGTTRDAIDTVIERDGQTYRLIDTAGIRKKKHIEYGTEFFSINRAFKAIRRADVVLLVLDAVDGVTEQDQKLAGRIIEEGRACIIVVNKWDAVEKDSYTIYDYEKTLQSRLHFTEWAETIFVSALSGQRVEKILELVKTAAESHKRRVSTSVINEVLTDAVSWHSPPASRGGRQGKIYYGTQVSSQPPTIALFVNDSKRFNDNYRRYIERQFRQQLGFKGTPIILLWRSKKVRDAEIGNVNRATRVKLS.

EngA-type G domains follow at residues 4-169 (PIVA…PAVE) and 177-352 (IKVA…ESHK). GTP contacts are provided by residues 10-17 (GRPNVGKS), 57-61 (DTGGL), 120-123 (NKCE), 183-190 (GRPNVGKS), 230-234 (DTAGI), and 295-298 (NKWD). Residues 353–438 (RRVSTSVINE…PIILLWRSKK (86 aa)) form the KH-like domain.

Belongs to the TRAFAC class TrmE-Era-EngA-EngB-Septin-like GTPase superfamily. EngA (Der) GTPase family. As to quaternary structure, associates with the 50S ribosomal subunit.

In terms of biological role, GTPase that plays an essential role in the late steps of ribosome biogenesis. The protein is GTPase Der of Nostoc punctiforme (strain ATCC 29133 / PCC 73102).